The following is a 121-amino-acid chain: Dihydroneopterin aldolase (121 aa).

Substrate is bound by residues E22, Y54, and 73 to 74 (IE). K100 serves as the catalytic Proton donor/acceptor.

This sequence belongs to the DHNA family. In terms of assembly, homooctamer. Four molecules assemble into a ring, and two rings come together to give a cylinder with a hole of at least 13 a diameter.

It carries out the reaction 7,8-dihydroneopterin = 6-hydroxymethyl-7,8-dihydropterin + glycolaldehyde. It catalyses the reaction 7,8-dihydroneopterin = 7,8-dihydromonapterin. Its pathway is cofactor biosynthesis; tetrahydrofolate biosynthesis; 2-amino-4-hydroxy-6-hydroxymethyl-7,8-dihydropteridine diphosphate from 7,8-dihydroneopterin triphosphate: step 3/4. Functionally, catalyzes the conversion of 7,8-dihydroneopterin to 6-hydroxymethyl-7,8-dihydropterin. Can also catalyze the epimerization of carbon 2' of dihydroneopterin to dihydromonapterin. This chain is Dihydroneopterin aldolase (folB), found in Staphylococcus epidermidis (strain ATCC 35984 / DSM 28319 / BCRC 17069 / CCUG 31568 / BM 3577 / RP62A).